The chain runs to 111 residues: Disintegrin lebein-1-alpha (111 aa).

The first 20 residues, Met1–Ser20, serve as a signal peptide directing secretion. Positions Ile21–Met47 are excised as a propeptide. The 65-residue stretch at Met47–Asp111 folds into the Disintegrin domain. Cystine bridges form between Cys53-Cys76, Cys67-Cys73, Cys72-Cys97, and Cys85-Cys104. Positions Arg89 to Asp91 match the Cell attachment site motif.

Belongs to the disintegrin family. Dimeric disintegrin subfamily. In terms of assembly, heterodimer with subunit beta; disulfide-linked. Expressed by the venom gland.

The protein resides in the secreted. In terms of biological role, strongly inhibits ADP-induced platelet aggregation on human platelet-rich plasma. Also avidly binds to the laminin-binding beta-1 integrins (alpha-3/beta-1, alpha-6/beta-1, and alpha-7/beta-1) in an RGD-independent manner. The sequence is that of Disintegrin lebein-1-alpha from Macrovipera lebetinus (Levantine viper).